The primary structure comprises 460 residues: A-type ATP synthase subunit B (460 aa).

It belongs to the ATPase alpha/beta chains family. In terms of assembly, has multiple subunits with at least A(3), B(3), C, D, E, F, H, I and proteolipid K(x).

The protein localises to the cell membrane. Its function is as follows. Component of the A-type ATP synthase that produces ATP from ADP in the presence of a proton gradient across the membrane. The B chain is a regulatory subunit. The polypeptide is A-type ATP synthase subunit B (Methanosarcina barkeri).